Reading from the N-terminus, the 130-residue chain is Anti-adapter protein IraD (130 aa).

The protein belongs to the GpW/Gp25 family. IraD subfamily. In terms of assembly, interacts with RssB.

The protein resides in the cytoplasm. In terms of biological role, inhibits RpoS proteolysis by regulating RssB activity, thereby increasing the stability of the sigma stress factor RpoS during oxidative stress. Its effect on RpoS stability is due to its interaction with RssB, which probably blocks the interaction of RssB with RpoS, and the consequent delivery of the RssB-RpoS complex to the ClpXP protein degradation pathway. The sequence is that of Anti-adapter protein IraD from Escherichia coli O139:H28 (strain E24377A / ETEC).